The primary structure comprises 281 residues: Pantothenate synthetase (281 aa).

ATP is bound at residue 31 to 38 (MGNLHAGH). Histidine 38 acts as the Proton donor in catalysis. Residue glutamine 62 participates in (R)-pantoate binding. Glutamine 62 provides a ligand contact to beta-alanine. Position 150–153 (150–153 (GKKD)) interacts with ATP. Glutamine 156 contacts (R)-pantoate. ATP is bound by residues valine 179 and 187–190 (MSSR).

Belongs to the pantothenate synthetase family. In terms of assembly, homodimer.

It is found in the cytoplasm. It carries out the reaction (R)-pantoate + beta-alanine + ATP = (R)-pantothenate + AMP + diphosphate + H(+). Its pathway is cofactor biosynthesis; (R)-pantothenate biosynthesis; (R)-pantothenate from (R)-pantoate and beta-alanine: step 1/1. Its function is as follows. Catalyzes the condensation of pantoate with beta-alanine in an ATP-dependent reaction via a pantoyl-adenylate intermediate. This Xylella fastidiosa (strain 9a5c) protein is Pantothenate synthetase.